Reading from the N-terminus, the 81-residue chain is Penaeidin-3j (81 aa).

Residues 1-19 (MRLVVCLVFLASFALVCQG) form the signal peptide. The residue at position 20 (glutamine 20) is a Pyrrolidone carboxylic acid. 3 disulfides stabilise this stretch: cysteine 50/cysteine 65, cysteine 54/cysteine 72, and cysteine 66/cysteine 73. Serine 80 is subject to Serine amide.

The protein belongs to the penaeidin family.

Its subcellular location is the cytoplasmic granule. Antibacterial and antifungal activity. Presents chitin-binding activity. The polypeptide is Penaeidin-3j (Penaeus vannamei (Whiteleg shrimp)).